Reading from the N-terminus, the 135-residue chain is C-type lectin APL (135 aa).

4 disulfide bridges follow: Cys-3-Cys-14, Cys-31-Cys-131, Cys-38-Cys-133, and Cys-106-Cys-123. The C-type lectin domain maps to 10 to 132 (MNGLCYKIFD…CESKNAFLCQ (123 aa)). Residues Gln-96, Asp-98, Glu-104, Asn-119, and Asp-120 each coordinate Ca(2+). Residues 96 to 98 (QPD) carry the Galactose-binding motif.

It belongs to the true venom lectin family. Homodimer; disulfide-linked. As to expression, expressed by the venom gland.

The protein resides in the secreted. Functionally, beta-galactoside lectin that agglutinates rabbit and human erythrocytes in a calcium-dependent fashion (MHC is 0.21 ug/ml on rabbit erythrocytes). Galactose (15 mM), lactose (20 mM), rhamnose (20 mM) and EGTA strongly inhibit this activity. The polypeptide is C-type lectin APL (Agkistrodon piscivorus piscivorus (Eastern cottonmouth)).